The chain runs to 66 residues: MPKMKTKSSAKKRFKVTATGKVMAGQAGKRHGMIKRTTKFIRDARGTTTLSAPDAKIVKGYMPYDR.

Belongs to the bacterial ribosomal protein bL35 family.

This Ruegeria pomeroyi (strain ATCC 700808 / DSM 15171 / DSS-3) (Silicibacter pomeroyi) protein is Large ribosomal subunit protein bL35.